The sequence spans 408 residues: LIN1-like protein (408 aa).

The tract at residues 1–161 (MKRTLRNPGN…SVPSSPKRMS (161 aa)) is disordered. Acidic residues predominate over residues 41–52 (YYESESEEDEDQ). 3 stretches are compositionally biased toward basic and acidic residues: residues 53 to 62 (ILNKEKKEGQ), 73 to 109 (DEKRTLPNDEAQKRRDFIENGDAERLAHKGLRNKEVL), and 119 to 129 (NGKYSKLRYED). In terms of domain architecture, GYF spans 344 to 402 (SSQYNFKWEFDDKTYGPYTASQIQAWSNEGYFTDAKHAAFIQLANMDEWMYPNNICFCD).

This sequence belongs to the LIN1 family.

This is LIN1-like protein from Schizosaccharomyces pombe (strain 972 / ATCC 24843) (Fission yeast).